A 145-amino-acid polypeptide reads, in one-letter code: 3-hydroxyacyl-[acyl-carrier-protein] dehydratase FabZ (145 aa).

H51 is a catalytic residue.

Belongs to the thioester dehydratase family. FabZ subfamily.

It localises to the cytoplasm. The enzyme catalyses a (3R)-hydroxyacyl-[ACP] = a (2E)-enoyl-[ACP] + H2O. Functionally, involved in unsaturated fatty acids biosynthesis. Catalyzes the dehydration of short chain beta-hydroxyacyl-ACPs and long chain saturated and unsaturated beta-hydroxyacyl-ACPs. The sequence is that of 3-hydroxyacyl-[acyl-carrier-protein] dehydratase FabZ from Staphylococcus saprophyticus subsp. saprophyticus (strain ATCC 15305 / DSM 20229 / NCIMB 8711 / NCTC 7292 / S-41).